The sequence spans 472 residues: Siroheme synthase 1 (472 aa).

Positions 1–203 (MDYLPLFADL…GQLTEAENEL (203 aa)) are precorrin-2 dehydrogenase /sirohydrochlorin ferrochelatase. NAD(+)-binding positions include 22-23 (EV) and 43-44 (QT). Ser-128 is modified (phosphoserine). The interval 215–472 (GEVALVGAGP…AISPSVVNLA (258 aa)) is uroporphyrinogen-III C-methyltransferase. S-adenosyl-L-methionine is bound at residue Pro-224. Residue Asp-247 is the Proton acceptor of the active site. Lys-269 serves as the catalytic Proton donor. S-adenosyl-L-methionine is bound by residues 300-302 (GGD), Ile-305, 330-331 (TA), Met-382, and Gly-411.

This sequence in the N-terminal section; belongs to the precorrin-2 dehydrogenase / sirohydrochlorin ferrochelatase family. It in the C-terminal section; belongs to the precorrin methyltransferase family.

The catalysed reaction is uroporphyrinogen III + 2 S-adenosyl-L-methionine = precorrin-2 + 2 S-adenosyl-L-homocysteine + H(+). It catalyses the reaction precorrin-2 + NAD(+) = sirohydrochlorin + NADH + 2 H(+). The enzyme catalyses siroheme + 2 H(+) = sirohydrochlorin + Fe(2+). It functions in the pathway cofactor biosynthesis; adenosylcobalamin biosynthesis; precorrin-2 from uroporphyrinogen III: step 1/1. The protein operates within cofactor biosynthesis; adenosylcobalamin biosynthesis; sirohydrochlorin from precorrin-2: step 1/1. It participates in porphyrin-containing compound metabolism; siroheme biosynthesis; precorrin-2 from uroporphyrinogen III: step 1/1. Its pathway is porphyrin-containing compound metabolism; siroheme biosynthesis; siroheme from sirohydrochlorin: step 1/1. It functions in the pathway porphyrin-containing compound metabolism; siroheme biosynthesis; sirohydrochlorin from precorrin-2: step 1/1. Its function is as follows. Multifunctional enzyme that catalyzes the SAM-dependent methylations of uroporphyrinogen III at position C-2 and C-7 to form precorrin-2 via precorrin-1. Then it catalyzes the NAD-dependent ring dehydrogenation of precorrin-2 to yield sirohydrochlorin. Finally, it catalyzes the ferrochelation of sirohydrochlorin to yield siroheme. In Yersinia pseudotuberculosis serotype I (strain IP32953), this protein is Siroheme synthase 1.